The following is a 332-amino-acid chain: Glycerol-3-phosphate dehydrogenase [NAD(P)+] (332 aa).

Positions 11, 12, 32, 33, and 106 each coordinate NADPH. Residues Lys106 and Gly136 each contribute to the sn-glycerol 3-phosphate site. Ala140 contributes to the NADPH binding site. Residues Lys191, Asp244, Ser254, Arg255, and Asn256 each contribute to the sn-glycerol 3-phosphate site. Lys191 acts as the Proton acceptor in catalysis. NADPH is bound at residue Arg255. NADPH contacts are provided by Val280 and Glu282.

This sequence belongs to the NAD-dependent glycerol-3-phosphate dehydrogenase family.

The protein resides in the cytoplasm. The catalysed reaction is sn-glycerol 3-phosphate + NAD(+) = dihydroxyacetone phosphate + NADH + H(+). The enzyme catalyses sn-glycerol 3-phosphate + NADP(+) = dihydroxyacetone phosphate + NADPH + H(+). It functions in the pathway membrane lipid metabolism; glycerophospholipid metabolism. Its function is as follows. Catalyzes the reduction of the glycolytic intermediate dihydroxyacetone phosphate (DHAP) to sn-glycerol 3-phosphate (G3P), the key precursor for phospholipid synthesis. The chain is Glycerol-3-phosphate dehydrogenase [NAD(P)+] from Corynebacterium aurimucosum (strain ATCC 700975 / DSM 44827 / CIP 107346 / CN-1) (Corynebacterium nigricans).